A 381-amino-acid polypeptide reads, in one-letter code: Glycerol-3-phosphate dehydrogenase [NAD(+)] (381 aa).

The interval 1–27 (MTAMDRLDHVSNQLAAKRQKKNPEGKP) is disordered. Residues 34 to 39 (GSGNWG), phenylalanine 66, and phenylalanine 122 each bind NAD(+). Lysine 145 serves as a coordination point for substrate. Alanine 178 is a binding site for NAD(+). Lysine 238 functions as the Proton acceptor in the catalytic mechanism. Residues arginine 303 and glutamine 332 each coordinate NAD(+). 303–304 (RN) lines the substrate pocket.

It belongs to the NAD-dependent glycerol-3-phosphate dehydrogenase family.

It catalyses the reaction sn-glycerol 3-phosphate + NAD(+) = dihydroxyacetone phosphate + NADH + H(+). This Pichia angusta (Yeast) protein is Glycerol-3-phosphate dehydrogenase [NAD(+)] (GPD).